The primary structure comprises 459 residues: C-type lectin domain family 14 member A (459 aa).

A signal peptide spans Met-1 to Gly-21. Residues Glu-22–Thr-386 are Extracellular-facing. In terms of domain architecture, C-type lectin spans Ala-33–Tyr-173. A disulfide bridge connects residues Cys-143 and Cys-162. The N-linked (GlcNAc...) asparagine glycan is linked to Asn-189. Residues Pro-246–Glu-288 enclose the EGF-like domain. N-linked (GlcNAc...) asparagine glycans are attached at residues Asn-306, Asn-317, and Asn-370. Residues Val-387–Leu-407 form a helical membrane-spanning segment. Over Gly-408–Ala-459 the chain is Cytoplasmic. The residue at position 440 (Ser-440) is a Phosphoserine.

It is found in the membrane. In Mus musculus (Mouse), this protein is C-type lectin domain family 14 member A (Clec14a).